The following is a 119-amino-acid chain: Large ribosomal subunit protein uL14 (119 aa).

It belongs to the universal ribosomal protein uL14 family. Part of the 50S ribosomal subunit. Forms a cluster with proteins L3 and L19. In the 70S ribosome, L14 and L19 interact and together make contacts with the 16S rRNA in bridges B5 and B8.

Functionally, binds to 23S rRNA. Forms part of two intersubunit bridges in the 70S ribosome. This is Large ribosomal subunit protein uL14 from Ehrlichia chaffeensis (strain ATCC CRL-10679 / Arkansas).